The primary structure comprises 219 residues: RPA-interacting protein (219 aa).

Ser18 carries the post-translational modification Phosphoserine. The RIP-type zinc finger occupies 137 to 212 (CPVCIKYNLR…PSLLMNCLTC (76 aa)). The mediates nuclear export stretch occupies residues 164 to 180 (STDLTEQKLRACLEENV).

Interacts with the RPA1 subunit of RPA complex. In terms of processing, sumoylated; required for localization in the nuclear PML body and transport of RPA complex in PML body. Upon UV irradiation and during S phase, it is desumoylated, releasing RPA complex that is translocated to sites of DNA damage. Sumoylation takes place at different Lys residues.

Its subcellular location is the nucleus. In terms of biological role, mediates the import of RPA complex into the nucleus, possibly via some interaction with importin beta. Sumoylation mediates the localization of RPA complex into the PML body of the nucleus, thereby participating in RPA function in DNA metabolism. The chain is RPA-interacting protein (Rpain) from Mus musculus (Mouse).